Here is a 312-residue protein sequence, read N- to C-terminus: Methionyl-tRNA formyltransferase (312 aa).

110 to 113 (SLLP) provides a ligand contact to (6S)-5,6,7,8-tetrahydrofolate.

This sequence belongs to the Fmt family.

It catalyses the reaction L-methionyl-tRNA(fMet) + (6R)-10-formyltetrahydrofolate = N-formyl-L-methionyl-tRNA(fMet) + (6S)-5,6,7,8-tetrahydrofolate + H(+). In terms of biological role, attaches a formyl group to the free amino group of methionyl-tRNA(fMet). The formyl group appears to play a dual role in the initiator identity of N-formylmethionyl-tRNA by promoting its recognition by IF2 and preventing the misappropriation of this tRNA by the elongation apparatus. The chain is Methionyl-tRNA formyltransferase from Mycobacterium ulcerans (strain Agy99).